Consider the following 336-residue polypeptide: Probable G-protein coupled receptor 82 (336 aa).

At 1 to 11 (MNNNTTCIQPS) the chain is on the extracellular side. N-linked (GlcNAc...) asparagine glycans are attached at residues Asn-3 and Asn-4. Residues 12–32 (MISSMALPIIYILLCIVGVFG) traverse the membrane as a helical segment. At 33 to 55 (NTLSQWIFLTKIGKKTSTHIYLS) the chain is on the cytoplasmic side. A helical membrane pass occupies residues 56-76 (HLVTANLLVCSAMPFMSIYFL). The Extracellular portion of the chain corresponds to 77–92 (KGFQWEYQSAQCRVVN). A helical transmembrane segment spans residues 93-115 (FLGTLSMHASMFVSLLILSWIAI). The Cytoplasmic portion of the chain corresponds to 116–156 (SRYATLMQKDSSQETTSCYEKIFYGHLLKKFRQPNFARKLC). A helical membrane pass occupies residues 157–177 (IYIWGVVLGIIIPVTVYYSVI). Residues 178 to 197 (EATEGEESLCYNRQMELGAM) lie on the Extracellular side of the membrane. The chain crosses the membrane as a helical span at residues 198–218 (ISQIAGLIGTTFIGFSFLVVL). Topologically, residues 219 to 251 (TSYYSFVSHLRKIRTCTSIMEKDLTYSSVKRHL) are cytoplasmic. The helical transmembrane segment at 252–272 (LVIQILLIVCFLPYSIFKPIF) threads the bilayer. The Extracellular segment spans residues 273–336 (YVLHQRDNCQ…SNSAHMQSYG (64 aa)).

This sequence belongs to the G-protein coupled receptor 1 family.

It is found in the cell membrane. Functionally, orphan receptor. The protein is Probable G-protein coupled receptor 82 (GPR82) of Homo sapiens (Human).